A 433-amino-acid polypeptide reads, in one-letter code: Protein disulfide-isomerase A6 homolog (433 aa).

Positions 1 to 19 (MRQLASILLLAFVVGSVSA) are cleaved as a signal peptide. Thioredoxin domains lie at 20 to 119 (FYSP…GQRT) and 120 to 267 (AKAI…KHVA). Catalysis depends on nucleophile residues Cys55, Cys58, Cys186, and Cys189. 2 disulfides stabilise this stretch: Cys55–Cys58 and Cys186–Cys189. Asn279 carries N-linked (GlcNAc...) asparagine glycosylation. The segment at 405–433 (VDPWDGKDGQLPTEEDIDLSDIDLDKDEL) is disordered. Residues 417-433 (TEEDIDLSDIDLDKDEL) are compositionally biased toward acidic residues. A Prevents secretion from ER motif is present at residues 430 to 433 (KDEL).

The protein belongs to the protein disulfide isomerase family. As to quaternary structure, interacts with Drpr (via extracellular region). As to expression, in the blastoderm embryo, expression starts at the anterior and posterior poles and later appears as broad stripes. Following gastrulation, expressed in midline precursor cells and the posterior head with low levels present throughout the embryo. During germ band extension, weak dorsoventral stripes of expression are evident. Midline expression begins and is retained throughout embryogenesis in clusters of cells in each segment in the central nervous system. At least some of the midline expression occurs in VUM neurons.

It localises to the endoplasmic reticulum lumen. The protein localises to the cell surface. It catalyses the reaction Catalyzes the rearrangement of -S-S- bonds in proteins.. In terms of biological role, binds to both apoptotic cells and phagocytes and promotes Drpr-dependent phagocytosis of apoptotic cells. In Drosophila melanogaster (Fruit fly), this protein is Protein disulfide-isomerase A6 homolog.